The following is a 126-amino-acid chain: Protein ApaG (126 aa).

The ApaG domain occupies Asp2–Asn126.

The chain is Protein ApaG from Vibrio campbellii (strain ATCC BAA-1116).